The chain runs to 319 residues: uncharacterized protein (319 aa).

An N-terminal signal peptide occupies residues 1-23 (MFPFRRNVLAFAALLALSSPVLA).

This sequence to H.influenzae HI_0755.

This is an uncharacterized protein from Escherichia coli (strain K12).